Here is a 142-residue protein sequence, read N- to C-terminus: Large ribosomal subunit protein uL16 (142 aa).

The protein belongs to the universal ribosomal protein uL16 family. Part of the 50S ribosomal subunit.

In terms of biological role, binds 23S rRNA and is also seen to make contacts with the A and possibly P site tRNAs. The protein is Large ribosomal subunit protein uL16 of Thermotoga sp. (strain RQ2).